A 140-amino-acid polypeptide reads, in one-letter code: Mialostatin (140 aa).

The first 18 residues, 1 to 18 (MAFFKSAVFLVCVVLAAA), serve as a signal peptide directing secretion. 2 disulfides stabilise this stretch: C90–C103 and C114–C134.

This sequence belongs to the cystatin family. As to expression, expressed in midgut (at protein level).

It is found in the secreted. Inhibitor of cysteine proteinases. Inhibits several endogenous midgut digestive cysteine proteases, such as cathepsin L1, L3, B and C, but not aspartic protease cathepsin D1 and cysteine protease legumain. Inhibits proteolysis of blood proteins catalyzed by tick gut cysteine cathepsins. Inhibits host cathepsin B (CSTB), C (CTSC), H (CTSH), K (CTSK), L (CTSL) and S (CTSS). This is Mialostatin from Ixodes ricinus (Common tick).